The sequence spans 734 residues: MAEKPVDSLSESEAEAELKRLAEEIAGHDRRYHAEDAPTITDAEYDALRRRNLAIEERFPGLVREDSPSRRVGAPPAEGFAKVRHAVPMLSLAKAYTDEDVTDFIERGRRFFDRDKDLDIAFTAEPKIDGLSASLRYENGVFVQGATRGDGAVGEDITANLRTIADIPAKLKGSGWPDVIEIRGEVYMTYAEFEALKARSAAAGGQDYVNPRNTAAGSLRQKDASVTASRNLKFFAYAWGFTTADPAPTQYESVQKFADWGFKISPLMVRAKSVEELVAQYHLIEEQRSSLGYDIDGVVYKVDQLELQRRWGFVTGEPRWAVAHKFPAEQAMTTVQKIDIQVGRTGTLAPVARLAPVTVGGVVVENVTLHNEDYIKGFDSNGLPIRDGIDVRIGDTVVIQRAGDVIPQIVSVVIDKRPADAVPYEFPHTCPVCGSPATREINEKTGKEDSRRRCTGELICAAQAVERLRHFVSRGALDIEGLGAENIDTFFNAGLIKTAADIFTLRDRRPAVTKALAERREEQARQREAASGKTRKNVRSVEDRNYEGLDKLFAAIDSRREPELDRFIFALGIRHIGETTAAVLAKTFSTIEELIRVGKETAAAEDPHTVFPSVNGIGDTVIDALCDFFGNERNDDVLDKLLEQVKPKPYIVTVSADSEVAGKTIVFTGTLEKMTRSEAKAMAERLGAKVAGSVSAKTDLLVAGPGAGSKLKLASELGVEVIDEDTWLQRVGKA.

Residues 42 to 46, 91 to 92, and Glu-125 each bind NAD(+); these read DAEYD and SL. Lys-127 (N6-AMP-lysine intermediate) is an active-site residue. NAD(+) contacts are provided by Arg-148, Glu-185, Lys-301, and Lys-325. The Zn(2+) site is built by Cys-430, Cys-433, Cys-454, and Cys-460. In terms of domain architecture, BRCT spans 655-734; it reads SADSEVAGKT…DTWLQRVGKA (80 aa).

Belongs to the NAD-dependent DNA ligase family. LigA subfamily. Mg(2+) serves as cofactor. Mn(2+) is required as a cofactor.

The enzyme catalyses NAD(+) + (deoxyribonucleotide)n-3'-hydroxyl + 5'-phospho-(deoxyribonucleotide)m = (deoxyribonucleotide)n+m + AMP + beta-nicotinamide D-nucleotide.. In terms of biological role, DNA ligase that catalyzes the formation of phosphodiester linkages between 5'-phosphoryl and 3'-hydroxyl groups in double-stranded DNA using NAD as a coenzyme and as the energy source for the reaction. It is essential for DNA replication and repair of damaged DNA. In Mesorhizobium japonicum (strain LMG 29417 / CECT 9101 / MAFF 303099) (Mesorhizobium loti (strain MAFF 303099)), this protein is DNA ligase.